The chain runs to 180 residues: ATP synthase subunit delta (180 aa).

It belongs to the ATPase delta chain family. F-type ATPases have 2 components, F(1) - the catalytic core - and F(0) - the membrane proton channel. F(1) has five subunits: alpha(3), beta(3), gamma(1), delta(1), epsilon(1). F(0) has three main subunits: a(1), b(2) and c(10-14). The alpha and beta chains form an alternating ring which encloses part of the gamma chain. F(1) is attached to F(0) by a central stalk formed by the gamma and epsilon chains, while a peripheral stalk is formed by the delta and b chains.

It localises to the cell membrane. Its function is as follows. F(1)F(0) ATP synthase produces ATP from ADP in the presence of a proton or sodium gradient. F-type ATPases consist of two structural domains, F(1) containing the extramembraneous catalytic core and F(0) containing the membrane proton channel, linked together by a central stalk and a peripheral stalk. During catalysis, ATP synthesis in the catalytic domain of F(1) is coupled via a rotary mechanism of the central stalk subunits to proton translocation. In terms of biological role, this protein is part of the stalk that links CF(0) to CF(1). It either transmits conformational changes from CF(0) to CF(1) or is implicated in proton conduction. The protein is ATP synthase subunit delta of Caldicellulosiruptor bescii (strain ATCC BAA-1888 / DSM 6725 / KCTC 15123 / Z-1320) (Anaerocellum thermophilum).